We begin with the raw amino-acid sequence, 689 residues long: Glycine--tRNA ligase beta subunit (689 aa).

Belongs to the class-II aminoacyl-tRNA synthetase family. As to quaternary structure, tetramer of two alpha and two beta subunits.

It localises to the cytoplasm. It carries out the reaction tRNA(Gly) + glycine + ATP = glycyl-tRNA(Gly) + AMP + diphosphate. The polypeptide is Glycine--tRNA ligase beta subunit (Actinobacillus pleuropneumoniae serotype 5b (strain L20)).